Reading from the N-terminus, the 51-residue chain is Large ribosomal subunit protein bL33 (51 aa).

It belongs to the bacterial ribosomal protein bL33 family.

This is Large ribosomal subunit protein bL33 from Methylococcus capsulatus (strain ATCC 33009 / NCIMB 11132 / Bath).